The chain runs to 203 residues: ATP-dependent Clp protease proteolytic subunit (203 aa).

Residue S107 is the Nucleophile of the active site. H132 is an active-site residue.

It belongs to the peptidase S14 family. In terms of assembly, fourteen ClpP subunits assemble into 2 heptameric rings which stack back to back to give a disk-like structure with a central cavity, resembling the structure of eukaryotic proteasomes.

Its subcellular location is the cytoplasm. It carries out the reaction Hydrolysis of proteins to small peptides in the presence of ATP and magnesium. alpha-casein is the usual test substrate. In the absence of ATP, only oligopeptides shorter than five residues are hydrolyzed (such as succinyl-Leu-Tyr-|-NHMec, and Leu-Tyr-Leu-|-Tyr-Trp, in which cleavage of the -Tyr-|-Leu- and -Tyr-|-Trp bonds also occurs).. Cleaves peptides in various proteins in a process that requires ATP hydrolysis. Has a chymotrypsin-like activity. Plays a major role in the degradation of misfolded proteins. This chain is ATP-dependent Clp protease proteolytic subunit, found in Thermotoga maritima (strain ATCC 43589 / DSM 3109 / JCM 10099 / NBRC 100826 / MSB8).